Here is a 142-residue protein sequence, read N- to C-terminus: MKTFSAKGHEVQRDWFVIDATDKVLGRVASEVALRLRGKHKPEFTPHVDTGDFIVVVNAGKLRVTGTKATDKTYYRHSGYPGGIYETNFKKMQERFPGRALEKAVKGMLPKGPLGYAMIKKLKVYAEETHPHAAQQPKALEL.

Belongs to the universal ribosomal protein uL13 family. In terms of assembly, part of the 50S ribosomal subunit.

Its function is as follows. This protein is one of the early assembly proteins of the 50S ribosomal subunit, although it is not seen to bind rRNA by itself. It is important during the early stages of 50S assembly. The chain is Large ribosomal subunit protein uL13 from Herminiimonas arsenicoxydans.